The sequence spans 446 residues: MGRSYYVDDRVEKYFSKLVQQQKACITGLIIGQYSSQRDYAVLTAQTPQKEDQNEEKKPGLSKLEEIDDEWVSMHASQVGRMLPGGLMVLGVFLMTTPDLSKDAQTILRKLVFAVEKSSMKNRLWNFDEDDVSERVTLHICSSTKKITCRTYDINDPKSTPKPADWKYQNSVLSWLTVDCNVRVDVTIPLTSPSLTYQERQKSIRLGLVKWTKEIEDSVVLFNGQYKDKNGDLFEEQKKSSRSSSHYSPQIITANFLNASPLIDNTRSTALVQPCKSSLTIQGVMKCRGFIHSNRPKVKDAMQAIKRDLLNTIQDRCELLFEDMMLNGPSNENDACPLPQRVFVPINGSNLKLCDYLFGDETTSDLQSHFLEIMDQEVEQNELDFTEKKCELAHPEKRESEPASQHLESKPENKARSSSTSLLNKGLVISTIVASIAIIISFYYIM.

Residues 76–96 (ASQVGRMLPGGLMVLGVFLMT) traverse the membrane as a helical segment. The segment covering 394-415 (HPEKRESEPASQHLESKPENKA) has biased composition (basic and acidic residues). Positions 394 to 417 (HPEKRESEPASQHLESKPENKARS) are disordered. A helical membrane pass occupies residues 426-446 (GLVISTIVASIAIIISFYYIM).

It belongs to the ODR-4 family.

Its subcellular location is the membrane. Its function is as follows. May play a role in the trafficking of a subset of G-protein coupled receptors. This Xenopus laevis (African clawed frog) protein is Protein odr-4 homolog (odr4).